Reading from the N-terminus, the 1106-residue chain is GYF domain-containing protein gyf-1 (1106 aa).

Residues 1-17 (MSSVSSAEPTAQQNFNP) show a composition bias toward polar residues. Disordered regions lie at residues 1–50 (MSSV…GGFD), 160–370 (GALQ…DSTV), and 383–434 (KAST…SAWS). The segment covering 30–42 (RGGSISSGNNRSS) has biased composition (low complexity). The span at 162–180 (LQNGQSPTSRWAPKSSWNK) shows a compositional bias: polar residues. Over residues 207–224 (GRGGGRIGGENGFGGATN) the composition is skewed to gly residues. Over residues 229–243 (AAQNEDSPGTYQSKF) the composition is skewed to polar residues. The span at 248-261 (RGGGAGSVGRGGST) shows a compositional bias: gly residues. Residues 306–322 (VGSTSRTSTNAAPQSSE) show a composition bias toward polar residues. 2 stretches are compositionally biased toward low complexity: residues 334-353 (QRTQ…QQAQ) and 390-410 (PPQQ…APSR). The 50-residue stretch at 459–508 (PVQFYYMDPTETRRGPFPKDQMNVWFKAGYFTDESLRVQRGENGEYKTIG) folds into the GYF domain. The stretch at 584–746 (LDDHNRRLAE…ERKRAAERER (163 aa)) forms a coiled coil. 4 disordered regions span residues 778-811 (AFTG…KTAP), 909-928 (KNSQ…SAKV), 1026-1076 (AGGR…DGNI), and 1087-1106 (RLNK…PSRR). Residues 786 to 801 (VSPSGSEESDEWISTS) are compositionally biased toward polar residues. Positions 1046–1057 (SDSNSGSNSNSG) are enriched in low complexity.

The polypeptide is GYF domain-containing protein gyf-1 (Caenorhabditis elegans).